Reading from the N-terminus, the 868-residue chain is Muscle, skeletal receptor tyrosine protein kinase (868 aa).

A signal peptide spans 1-21 (MRELVNIPLLQMLTLVAFSGT). Residues 22-494 (EKLPKAPVIT…FAVSPAYSMT (473 aa)) are Extracellular-facing. Ig-like domains are found at residues 28–116 (PVIT…GALQ), 121–205 (PKIT…KLVK), and 212–302 (ARIL…ATVS). Disulfide bonds link Cys-49/Cys-99, Cys-98/Cys-112, and Cys-142/Cys-190. An N-linked (GlcNAc...) asparagine glycan is attached at Asn-222. 6 disulfides stabilise this stretch: Cys-233–Cys-282, Cys-317–Cys-382, Cys-325–Cys-375, Cys-366–Cys-406, Cys-394–Cys-447, and Cys-398–Cys-434. In terms of domain architecture, FZ spans 312 to 450 (ESKGYCAQYR…HQDPTACTRL (139 aa)). N-linked (GlcNAc...) asparagine glycosylation is present at Asn-338. Asn-459 is a glycosylation site (N-linked (GlcNAc...) asparagine). A helical transmembrane segment spans residues 495-515 (VIISIMSCFAVFALLTITTLY). Topologically, residues 516–868 (CCRRRREWKN…CERAEGTVGV (353 aa)) are cytoplasmic. Tyr-553 carries the phosphotyrosine; by autocatalysis modification. In terms of domain architecture, Protein kinase spans 574-855 (IEYVRDIGEG…PSFCSIHRIL (282 aa)). Residues 580–588 (IGEGAFGRV) and Lys-608 contribute to the ATP site. Phosphoserine; by CK2 occurs at positions 680 and 697. Asp-724 acts as the Proton acceptor in catalysis. Position 754 is a phosphotyrosine; by autocatalysis (Tyr-754).

The protein belongs to the protein kinase superfamily. Tyr protein kinase family. As to quaternary structure, monomer. Homodimer. Interacts with LRP4; the heterodimer forms an AGRIN receptor complex that binds AGRIN resulting in activation of MUSK. Forms a heterotetramer composed of 2 DOK7 and 2 MUSK molecules which facilitates MUSK trans-autophosphorylation on tyrosine residue and activation. Interacts (via cytoplasmic part) with DOK7 (via IRS-type PTB domain); requires MUSK phosphorylation. Interacts with DVL1 (via DEP domain); the interaction is direct and mediates the formation of a DVL1, MUSK and PAK1 ternary complex involved in AChR clustering. Interacts with PDZRN3; this interaction is enhanced by agrin. Interacts with FNTA; the interaction is direct and mediates AGRIN-induced phosphorylation and activation of FNTA. Interacts with CSNK2B; mediates regulation by CK2. Interacts (via the cytoplasmic domain) with DNAJA3. Interacts with NSF; may regulate MUSK endocytosis and activity. Interacts with CAV3; may regulate MUSK signaling. Interacts with RNF31. Interacts with DOK7. The cofactor is Mg(2+). In terms of processing, ubiquitinated by PDZRN3. Ubiquitination promotes endocytosis and lysosomal degradation. Post-translationally, phosphorylated. Phosphorylation is induced by AGRIN in a LRP4-dependent manner. Autophosphorylated. Autophosphorylation at Tyr-553 is required for interaction with DOK7 which in turn stimulates the phosphorylation and the activation of MUSK. Neddylated. In terms of tissue distribution, muscle specific.

Its subcellular location is the postsynaptic cell membrane. It catalyses the reaction L-tyrosyl-[protein] + ATP = O-phospho-L-tyrosyl-[protein] + ADP + H(+). With respect to regulation, positively regulated by CK2. Functionally, receptor tyrosine kinase which plays a central role in the formation and the maintenance of the neuromuscular junction (NMJ), the synapse between the motor neuron and the skeletal muscle. Recruitment of AGRIN by LRP4 to the MUSK signaling complex induces phosphorylation and activation of MUSK, the kinase of the complex. The activation of MUSK in myotubes regulates the formation of NMJs through the regulation of different processes including the specific expression of genes in subsynaptic nuclei, the reorganization of the actin cytoskeleton and the clustering of the acetylcholine receptors (AChR) in the postsynaptic membrane. May regulate AChR phosphorylation and clustering through activation of ABL1 and Src family kinases which in turn regulate MUSK. DVL1 and PAK1 that form a ternary complex with MUSK are also important for MUSK-dependent regulation of AChR clustering. May positively regulate Rho family GTPases through FNTA. Mediates the phosphorylation of FNTA which promotes prenylation, recruitment to membranes and activation of RAC1 a regulator of the actin cytoskeleton and of gene expression. Other effectors of the MUSK signaling include DNAJA3 which functions downstream of MUSK. May also play a role within the central nervous system by mediating cholinergic responses, synaptic plasticity and memory formation. The sequence is that of Muscle, skeletal receptor tyrosine protein kinase (Musk) from Rattus norvegicus (Rat).